The sequence spans 764 residues: FAST kinase domain-containing protein 5, mitochondrial (764 aa).

Residues 1–27 (MAATLKSLKLLRYQAFCSPSAFGAVRS) constitute a mitochondrion transit peptide. The segment at 68-94 (IPTTSSARPGLEFSKTSSSKASTLQLG) is disordered. Over residues 81 to 93 (SKTSSSKASTLQL) the composition is skewed to polar residues. S95 is modified (phosphoserine). K507 is modified (N6-acetyllysine). The RAP domain occupies 697-757 (LAIQFTNRNQ…RLEKLAFLHE (61 aa)).

It belongs to the FAST kinase family. Found in a complex with GRSF1, DDX28, DHX30 and FASTKD2. Associates with the 12S mitochondrial rRNA (12S mt-rRNA).

The protein localises to the mitochondrion matrix. Its subcellular location is the mitochondrion nucleoid. In terms of biological role, plays an important role in the processing of non-canonical mitochondrial mRNA precursors. This Pongo abelii (Sumatran orangutan) protein is FAST kinase domain-containing protein 5, mitochondrial (FASTKD5).